The following is a 374-amino-acid chain: D-amino-acid oxidase 3 (374 aa).

Positions 1 to 19 (MVKYDAIILGSGVLGLSIA) are cleaved as a signal peptide. 7 residues coordinate FAD: Ser-11, Leu-14, Lys-34, Asp-35, Ala-46, Ser-47, and Gly-51. Residue Asn-180 is glycosylated (N-linked (GlcNAc...) asparagine). Cysteines 214 and 271 form a disulfide. (R)-lactate is bound by residues Tyr-229, Tyr-246, and Arg-296. Tyr-229, Tyr-246, and Arg-296 together coordinate anthranilate. Arg-296, Gly-342, Gly-345, Tyr-346, and Gln-347 together coordinate FAD. Positions 372 to 374 (AKL) match the Microbody targeting signal motif.

Belongs to the DAMOX/DASOX family. Requires FAD as cofactor.

The protein resides in the peroxisome matrix. It carries out the reaction a D-alpha-amino acid + O2 + H2O = a 2-oxocarboxylate + H2O2 + NH4(+). Catalyzes the oxidative deamination of D-amino acids with broad substrate specificity. Enables the organism to utilize D-amino acids as a source of nutrients. Enables the organism to utilize D-asparate and D-glutamate as a nitrogen source and may also contribute to utlization of D-tryptophan, D-tyrosine and D-asparagine as a nitrogen source. Protects the organism from the toxicity of D-amino acids, including from D-glutamate. May play a role in its interaction with the host. This Cryptococcus deuterogattii (strain R265) (Cryptococcus gattii VGII (strain R265)) protein is D-amino-acid oxidase 3.